The sequence spans 159 residues: Cyclin-dependent kinase inhibitor 1 (159 aa).

An N-acetylserine modification is found at Ser-2. A Glycyl serine ester (Ser-Gly) (interchain with G-Cter in ubiquitin) cross-link involves residue Ser-2. The segment at His-12–Cys-40 adopts a C4-type zinc-finger fold. Residues Cys-17–Val-24 form a required for binding cyclins region. The segment at Val-53–Leu-58 is required for binding CDKs. Ser-78 carries the phosphoserine; by NUAK1 modification. The tract at residues Ser-78–Glu-106 is disordered. Residues Arg-82 to Pro-93 are compositionally biased toward basic and acidic residues. Ser-112 carries the post-translational modification Phosphoserine; by GSK3-beta. The disordered stretch occupies residues Val-118 to Leu-142. A Phosphoserine modification is found at Ser-125. The short motif at Arg-135–Pro-159 is the PIP-box K+4 motif element. Thr-140 is subject to Phosphothreonine; by PKA, PKB/AKT1, PIM1 and PIM2. The residue at position 141 (Ser-141) is a Phosphoserine; by NUAK1. The segment at His-147–Pro-159 is interaction with TRIM39.

It belongs to the CDI family. In terms of assembly, interacts with HDAC1; the interaction is prevented by competitive binding of C10orf90/FATS to HDAC1 facilitating acetylation and protein stabilization of CDKN1A/p21. Interacts with MKRN1. Interacts with PSMA3. Interacts with PCNA. Component of the ternary complex, cyclin D-CDK4-CDKN1A. Interacts (via its N-terminal domain) with CDK4; the interaction promotes the assembly of the cyclin D-CDK4 complex, its nuclear translocation and promotes the cyclin D-dependent enzyme activity of CDK4. Binding to CDK2 leads to CDK2/cyclin E inactivation at the G1-S phase DNA damage checkpoint, thereby arresting cells at the G1-S transition during DNA repair. Interacts with PIM1. Interacts with STK11. Interacts with NUAK1. Interacts with DTL and TRIM39. Interacts with PKP3; the interaction sequesters CDKN1A to the cytoplasm thereby repressing its role as an inhibitor of CDK4- and CDK6-driven RB1 phosphorylation. In terms of processing, phosphorylation of Thr-140 or Ser-141 impairs binding to PCNA. Phosphorylation at Ser-112 by GSK3-beta enhances ubiquitination by the DCX(DTL) complex. Phosphorylation of Thr-140 by PIM2 enhances its stability and inhibits cell proliferation. Phosphorylation of Thr-140 by PIM1 results in the relocation of CDKN1A to the cytoplasm and enhanced CDKN1A protein stability. UV radiation-induced phosphorylation at Ser-78 and Ser-141 by NUAK1 leads to its degradation. Post-translationally, ubiquitinated by MKRN1; leading to polyubiquitination and 26S proteasome-dependent degradation. Ubiquitinated by the DCX(DTL) complex, also named CRL4(CDT2) complex, leading to its degradation during S phase or following UV irradiation. Ubiquitination by the DCX(DTL) complex is essential to control replication licensing and is PCNA-dependent: interacts with PCNA via its PIP-box, while the presence of the containing the 'K+4' motif in the PIP box, recruit the DCX(DTL) complex, leading to its degradation. Ubiquitination at Ser-2 leads to degradation by the proteasome pathway. Ubiquitinated by RNF114; leading to proteasomal degradation. Acetylation leads to protein stability. Acetylated in vitro on Lys-136, Lys-149, Lys-156 and Lys-158. Deacetylation by HDAC1 is prevented by competitive binding of C10orf90/FATS to HDAC1. In terms of tissue distribution, expressed in keratinocytes (at protein level).

The protein resides in the cytoplasm. It localises to the nucleus. Functionally, may be involved in p53/TP53 mediated inhibition of cellular proliferation in response to DNA damage. Binds to and inhibits cyclin-dependent kinase activity, preventing phosphorylation of critical cyclin-dependent kinase substrates and blocking cell cycle progression. Functions in the nuclear localization and assembly of cyclin D-CDK4 complex and promotes its kinase activity towards RB1. At higher stoichiometric ratios, inhibits the kinase activity of the cyclin D-CDK4 complex. Inhibits DNA synthesis by DNA polymerase delta by competing with POLD3 for PCNA binding. Plays an important role in controlling cell cycle progression and DNA damage-induced G2 arrest. Its function is as follows. Plays an important role in controlling cell cycle progression and DNA damage-induced G2 arrest. Involved in p53/TP53 mediated inhibition of cellular proliferation in response to DNA damage. Also involved in p53-independent DNA damage-induced G2 arrest mediated by CREB3L1 in astrocytes and osteoblasts. Binds to and inhibits cyclin-dependent kinase activity, preventing phosphorylation of critical cyclin-dependent kinase substrates and blocking cell cycle progression. Functions in the nuclear localization and assembly of cyclin D-CDK4 complex and promotes its kinase activity towards RB1. At higher stoichiometric ratios, inhibits the kinase activity of the cyclin D-CDK4 complex. Inhibits DNA synthesis by DNA polymerase delta by competing with POLD3 for PCNA binding. Negatively regulates the CDK4- and CDK6-driven phosphorylation of RB1 in keratinocytes, thereby resulting in the release of E2F1 and subsequent transcription of E2F1-driven G1/S phase promoting genes. The protein is Cyclin-dependent kinase inhibitor 1 (Cdkn1a) of Mus musculus (Mouse).